The following is a 332-amino-acid chain: Ribose-phosphate pyrophosphokinase (332 aa).

ATP-binding positions include 43–45 (DGE) and 102–103 (RQ). Mg(2+) contacts are provided by H136 and D176. K199 is an active-site residue. Residues R201, D225, and 229-233 (DTGGT) each bind D-ribose 5-phosphate.

It belongs to the ribose-phosphate pyrophosphokinase family. Class I subfamily. As to quaternary structure, homohexamer. Requires Mg(2+) as cofactor.

Its subcellular location is the cytoplasm. It catalyses the reaction D-ribose 5-phosphate + ATP = 5-phospho-alpha-D-ribose 1-diphosphate + AMP + H(+). Its pathway is metabolic intermediate biosynthesis; 5-phospho-alpha-D-ribose 1-diphosphate biosynthesis; 5-phospho-alpha-D-ribose 1-diphosphate from D-ribose 5-phosphate (route I): step 1/1. Its function is as follows. Involved in the biosynthesis of the central metabolite phospho-alpha-D-ribosyl-1-pyrophosphate (PRPP) via the transfer of pyrophosphoryl group from ATP to 1-hydroxyl of ribose-5-phosphate (Rib-5-P). The polypeptide is Ribose-phosphate pyrophosphokinase (Mycoplasma genitalium (strain ATCC 33530 / DSM 19775 / NCTC 10195 / G37) (Mycoplasmoides genitalium)).